Reading from the N-terminus, the 385-residue chain is Arginine biosynthesis bifunctional protein ArgJ (385 aa).

6 residues coordinate substrate: Thr142, Lys168, Thr179, Glu259, Asn380, and Thr385. Residue Thr179 is the Nucleophile of the active site.

This sequence belongs to the ArgJ family. Heterotetramer of two alpha and two beta chains.

It is found in the cytoplasm. The catalysed reaction is N(2)-acetyl-L-ornithine + L-glutamate = N-acetyl-L-glutamate + L-ornithine. The enzyme catalyses L-glutamate + acetyl-CoA = N-acetyl-L-glutamate + CoA + H(+). It participates in amino-acid biosynthesis; L-arginine biosynthesis; L-ornithine and N-acetyl-L-glutamate from L-glutamate and N(2)-acetyl-L-ornithine (cyclic): step 1/1. Its pathway is amino-acid biosynthesis; L-arginine biosynthesis; N(2)-acetyl-L-ornithine from L-glutamate: step 1/4. Its function is as follows. Catalyzes two activities which are involved in the cyclic version of arginine biosynthesis: the synthesis of N-acetylglutamate from glutamate and acetyl-CoA as the acetyl donor, and of ornithine by transacetylation between N(2)-acetylornithine and glutamate. The polypeptide is Arginine biosynthesis bifunctional protein ArgJ (Leptospira interrogans serogroup Icterohaemorrhagiae serovar copenhageni (strain Fiocruz L1-130)).